Reading from the N-terminus, the 152-residue chain is Large ribosomal subunit protein bL9 (152 aa).

This sequence belongs to the bacterial ribosomal protein bL9 family.

Functionally, binds to the 23S rRNA. In Acaryochloris marina (strain MBIC 11017), this protein is Large ribosomal subunit protein bL9.